The chain runs to 356 residues: Chorismate synthase (356 aa).

Residue arginine 44 participates in NADP(+) binding. FMN is bound by residues 121-123, glycine 278, 293-297, and arginine 320; these read HFS and KPTPS.

Belongs to the chorismate synthase family. It depends on FMNH2 as a cofactor.

The enzyme catalyses 5-O-(1-carboxyvinyl)-3-phosphoshikimate = chorismate + phosphate. The protein operates within metabolic intermediate biosynthesis; chorismate biosynthesis; chorismate from D-erythrose 4-phosphate and phosphoenolpyruvate: step 7/7. Functionally, catalyzes the anti-1,4-elimination of the C-3 phosphate and the C-6 proR hydrogen from 5-enolpyruvylshikimate-3-phosphate (EPSP) to yield chorismate, which is the branch point compound that serves as the starting substrate for the three terminal pathways of aromatic amino acid biosynthesis. This reaction introduces a second double bond into the aromatic ring system. In Pyrococcus abyssi (strain GE5 / Orsay), this protein is Chorismate synthase.